The chain runs to 615 residues: Prickle planar cell polarity protein 3 (615 aa).

Residues 1 to 12 (MFARGSRRRRSG) are compositionally biased toward basic residues. The interval 1-26 (MFARGSRRRRSGRAPPEAEDPDRGQP) is disordered. Positions 74–182 (SDFQRHSISD…IVRIFPVTIT (109 aa)) constitute a PET domain. LIM zinc-binding domains are found at residues 184 to 249 (AICE…CLRP), 250 to 309 (RCQA…RHAE), and 310 to 373 (YCDG…SEPT). Disordered stretches follow at residues 396–567 (ASFS…LGER) and 587–615 (TFNS…CIVA). Polar residues predominate over residues 405-415 (SETTTKGTSTE). Phosphoserine occurs at positions 475 and 491. The segment covering 508–531 (PSRRRHHHHNHHHHHNRHPSRRRH) has biased composition (basic residues). A compositionally biased stretch (low complexity) spans 537–555 (GSGSDSESCSSSPSSSSSE). Positions 606–615 (QARDKNCIVA) are enriched in basic and acidic residues.

Belongs to the prickle / espinas / testin family. As to quaternary structure, interacts with VANGL2 via its C-terminus. The VANGL2-dependent membrane recruitment of PRICKLE3 is a prerequisite for its polarization. Interacts with WTIP. WTIP is involved in the recruitment of PRICKLE3 to the basal body. Interacts with MT-ATP8, a component of the mitochondrial complex V. As to expression, widely expressed.

It localises to the cytoplasm. It is found in the cell membrane. The protein resides in the mitochondrion. In terms of biological role, involved in the planar cell polarity (PCP) pathway that is essential for the polarization of epithelial cells during morphogenetic processes, including gastrulation and neurulation. PCP is maintained by two molecular modules, the global and the core modules, PRICKLE3 being part of the core module. Distinct complexes of the core module segregate to opposite sides of the cell, where they interact with the opposite complex in the neighboring cell at or near the adherents junctions. Involved in the organization of the basal body. Involved in cilia growth and positioning. Required for proper assembly, stability, and function of mitochondrial membrane ATP synthase (mitochondrial complex V). The protein is Prickle planar cell polarity protein 3 of Homo sapiens (Human).